The chain runs to 895 residues: Pyruvate dehydrogenase E1 component (895 aa).

The tract at residues 1–20 (MSAVPEQILGASSANDADPQ) is disordered.

In terms of assembly, homodimer. Part of the PDH complex, consisting of multiple copies of pyruvate dehydrogenase (E1), dihydrolipoamide acetyltransferase (E2) and lipoamide dehydrogenase (E3). Thiamine diphosphate serves as cofactor.

The enzyme catalyses N(6)-[(R)-lipoyl]-L-lysyl-[protein] + pyruvate + H(+) = N(6)-[(R)-S(8)-acetyldihydrolipoyl]-L-lysyl-[protein] + CO2. Functionally, component of the pyruvate dehydrogenase (PDH) complex, that catalyzes the overall conversion of pyruvate to acetyl-CoA and CO(2). In Cupriavidus necator (strain ATCC 17699 / DSM 428 / KCTC 22496 / NCIMB 10442 / H16 / Stanier 337) (Ralstonia eutropha), this protein is Pyruvate dehydrogenase E1 component (pdhA).